Reading from the N-terminus, the 470-residue chain is Glutamate--tRNA ligase (470 aa).

The short motif at 12-22 is the 'HIGH' region element; the sequence is PSPTGIFHVGG. The Zn(2+) site is built by Cys103, Cys105, Cys125, and Asp127. The 'KMSKS' region signature appears at 236 to 240; the sequence is KLSKR. ATP is bound at residue Lys239.

Belongs to the class-I aminoacyl-tRNA synthetase family. Glutamate--tRNA ligase type 1 subfamily. In terms of assembly, monomer. Zn(2+) serves as cofactor.

The protein resides in the cytoplasm. It catalyses the reaction tRNA(Glu) + L-glutamate + ATP = L-glutamyl-tRNA(Glu) + AMP + diphosphate. In terms of biological role, catalyzes the attachment of glutamate to tRNA(Glu) in a two-step reaction: glutamate is first activated by ATP to form Glu-AMP and then transferred to the acceptor end of tRNA(Glu). The protein is Glutamate--tRNA ligase of Frankia alni (strain DSM 45986 / CECT 9034 / ACN14a).